The primary structure comprises 52 residues: Ovomucoid (52 aa).

Positions 2–52 constitute a Kazal-like domain; that stretch reads VDCSEYPKPACPKDYRPVCGSDNKTYGNKCNFCNAVVESNGTLTLNRFGKC. Disulfide bonds link Cys-4/Cys-34, Cys-12/Cys-31, and Cys-20/Cys-52. N-linked (GlcNAc...) asparagine glycosylation occurs at Asn-41.

The protein localises to the secreted. This chain is Ovomucoid, found in Coturnix delegorguei (Harlequin quail).